Reading from the N-terminus, the 260-residue chain is tRNA pseudouridine synthase C (260 aa).

Asp54 is an active-site residue.

Belongs to the pseudouridine synthase RluA family.

The enzyme catalyses uridine(65) in tRNA = pseudouridine(65) in tRNA. Its function is as follows. Responsible for synthesis of pseudouridine from uracil-65 in transfer RNAs. The chain is tRNA pseudouridine synthase C (truC) from Escherichia coli O157:H7.